The following is a 207-amino-acid chain: Ras-related protein Rab-8A (207 aa).

Residues S17, G18, V19, G20, K21, T22, C23, S35, S39, and T40 each contribute to the GTP site. T22 is a binding site for Mg(2+). 2 consecutive short sequence motifs (switch) follow at residues 31–45 and 63–80; these read DAFN…GIDF and DTAG…YYRG. Positions 40 and 63 each coordinate Mg(2+). G66 contacts GTP. The residue at position 72 (T72) is a Phosphothreonine; by LRRK2. N121, K122, D124, A152, and K153 together coordinate GTP. S181 and S185 each carry phosphoserine. C204 is subject to Cysteine methyl ester. C204 is lipidated: S-geranylgeranyl cysteine. A propeptide spans 205–207 (removed in mature form); that stretch reads SLL.

This sequence belongs to the small GTPase superfamily. Rab family. Interacts (GTP-bound form) with MICALL1; regulates RAB8A association with recycling endosomes. Interacts with MICALL2; competes with RAB13 and is involved in E-cadherin endocytic recycling. Interacts (GTP-bound form) with MICAL1, MICALCL, MICAL3 and EHBP1L1; two molecules of RAB8A can bind to one molecule of the effector protein; ternary complexes of RAB8A, RAB13 and either MICAL1 or EHBP1L1 are possible. Interacts (GTP-bound form) with EHBP1. Interacts with EHD1. Interacts with MAP4K2 and SYTL4. Interacts with SGSM1 and SGSM3. Interacts with RABIF, RIMS2, RPH3A and RPH3A. Interacts with OPTN. Interacts with MYO5B. Interacts with CIMAP3. Interacts with BIRC6/bruce. Interacts with OCRL. Interacts with AHI1. Interacts with DCDC1. Interacts with LRRK2; interaction facilitates phosphorylation of Thr-72. Interacts with RAB31P, GDI1, GDI2, CHM, CHML, RABGGTA, RABGGTB, TBC1D15 and INPP5B; these interactions are dependent on Thr-72 not being phosphorylated. Interacts with RILPL1 and RILPL2; these interactions are dependent on the phosphorylation of Thr-72 by LRRK2. Interacts with DZIP1; prevents inhibition by the GDP-dissociation inhibitor GDI2. Interacts with RAB3IP/Rabin8, RAB3IP functions as guanine exchange factor (GEF) towards RAB8A. Interacts (in GDP-bound form) with RPGR, RPGR functions as GEF towards RAB8A. Mg(2+) serves as cofactor. In terms of processing, phosphorylation of Thr-72 in the switch II region by LRRK2 prevents the association of RAB regulatory proteins, including CHM, CHML and RAB GDP dissociation inhibitors GDI1 and GDI2. Phosphorylation by LRRK2 is required for localization to stressed lysosomes.

It localises to the cell membrane. The protein resides in the golgi apparatus. Its subcellular location is the endosome membrane. It is found in the recycling endosome membrane. The protein localises to the cell projection. It localises to the cilium. The protein resides in the cytoplasmic vesicle. Its subcellular location is the phagosome membrane. It is found in the cytoplasm. The protein localises to the cytoskeleton. It localises to the microtubule organizing center. The protein resides in the centrosome. Its subcellular location is the centriole. It is found in the cilium basal body. The protein localises to the midbody. It localises to the lysosome. It carries out the reaction GTP + H2O = GDP + phosphate + H(+). Its activity is regulated as follows. Regulated by guanine nucleotide exchange factors (GEFs) such as RAB3IP/Rabin8 and RPGR which promote the exchange of bound GDP for free GTP, GTPase activating proteins (GAPs) which increase the GTP hydrolysis activity, and GDP dissociation inhibitors (GDIs) which inhibit the dissociation of the nucleotide from the GTPase. Activated in response to insulin. The small GTPases Rab are key regulators of intracellular membrane trafficking, from the formation of transport vesicles to their fusion with membranes. Rabs cycle between an inactive GDP-bound form and an active GTP-bound form that is able to recruit to membranes different sets of downstream effectors directly responsible for vesicle formation, movement, tethering and fusion. RAB8A is involved in polarized vesicular trafficking and neurotransmitter release. Together with RAB11A, RAB3IP, the exocyst complex, PARD3, PRKCI, ANXA2, CDC42 and DNMBP promotes transcytosis of PODXL to the apical membrane initiation sites (AMIS), apical surface formation and lumenogenesis. Regulates the compacted morphology of the Golgi. Together with MYO5B and RAB11A participates in epithelial cell polarization. Also involved in membrane trafficking to the cilium and ciliogenesis. Together with MICALL2, may also regulate adherens junction assembly. May play a role in insulin-induced transport to the plasma membrane of the glucose transporter GLUT4 and therefore play a role in glucose homeostasis. Involved in autophagy. Participates in the export of a subset of neosynthesized proteins through a Rab8-Rab10-Rab11-dependent endososomal export route. Targeted to and stabilized on stressed lysosomes through LRRK2 phosphorylation. Suppresses stress-induced lysosomal enlargement through EHBP1 and EHNP1L1 effector proteins. The protein is Ras-related protein Rab-8A of Mus musculus (Mouse).